Here is a 164-residue protein sequence, read N- to C-terminus: R-phycoerythrin alpha chain (164 aa).

Residues N47, K81, C82, R84, H88, R137, C139, and R142 each coordinate (2R,3E)-phycoerythrobilin.

Belongs to the phycobiliprotein family. As to quaternary structure, heterododecamer of 6 alpha and 6 beta chains. The basic functional unit of phycobiliproteins is a ring-shaped hexamer formed from two back-to-back trimers contacting via the alpha chain subunits. The trimers are composed of alpha/beta subunit heterodimers arranged around a three-fold axis of symmetry. The phycoerythrins also contain a gamma subunit which is located in the center of the hexamer. In terms of processing, contains two covalently linked phycoerythrobilin chromophores. In PubMed:8876649 the authors refer to the bilins as phycoerythrobilins. In the PDB entries, the bilins are named as phycocyanobilins although the modeled compounds correspond to phycoerythrobilins.

It localises to the plastid. Its subcellular location is the chloroplast thylakoid membrane. Functionally, light-harvesting photosynthetic tetrapyrrole chromophore-protein from the phycobiliprotein complex. The sequence is that of R-phycoerythrin alpha chain (cpeA) from Polysiphonia urceolata (Red alga).